Consider the following 877-residue polypeptide: Leucine--tRNA ligase (877 aa).

Residues 43-53 carry the 'HIGH' region motif; the sequence is PYPSGRIHMGH. The 'KMSKS' region motif lies at 628–632; it reads KMSKS. Lys631 contacts ATP.

The protein belongs to the class-I aminoacyl-tRNA synthetase family.

It localises to the cytoplasm. The enzyme catalyses tRNA(Leu) + L-leucine + ATP = L-leucyl-tRNA(Leu) + AMP + diphosphate. The polypeptide is Leucine--tRNA ligase (Brucella anthropi (strain ATCC 49188 / DSM 6882 / CCUG 24695 / JCM 21032 / LMG 3331 / NBRC 15819 / NCTC 12168 / Alc 37) (Ochrobactrum anthropi)).